The following is a 332-amino-acid chain: Methionine import ATP-binding protein MetN (332 aa).

One can recognise an ABC transporter domain in the interval 2–241; that stretch reads IELKGLTKVF…PGSRLRELFY (240 aa). An ATP-binding site is contributed by 38–45; that stretch reads GQSGAGKS.

It belongs to the ABC transporter superfamily. Methionine importer (TC 3.A.1.24) family. In terms of assembly, the complex is composed of two ATP-binding proteins (MetN), two transmembrane proteins (MetI) and a solute-binding protein (MetQ).

It localises to the cell membrane. It catalyses the reaction L-methionine(out) + ATP + H2O = L-methionine(in) + ADP + phosphate + H(+). The catalysed reaction is D-methionine(out) + ATP + H2O = D-methionine(in) + ADP + phosphate + H(+). Functionally, part of the ABC transporter complex MetNIQ involved in methionine import. Responsible for energy coupling to the transport system. The polypeptide is Methionine import ATP-binding protein MetN (Symbiobacterium thermophilum (strain DSM 24528 / JCM 14929 / IAM 14863 / T)).